A 216-amino-acid polypeptide reads, in one-letter code: Ribonuclease HII (216 aa).

Residues aspartate 28–arginine 216 enclose the RNase H type-2 domain. The a divalent metal cation site is built by aspartate 34, glutamate 35, and aspartate 126.

The protein belongs to the RNase HII family. Mn(2+) is required as a cofactor. Requires Mg(2+) as cofactor.

The protein resides in the cytoplasm. The catalysed reaction is Endonucleolytic cleavage to 5'-phosphomonoester.. Its function is as follows. Endonuclease that specifically degrades the RNA of RNA-DNA hybrids. This chain is Ribonuclease HII, found in Burkholderia vietnamiensis (strain G4 / LMG 22486) (Burkholderia cepacia (strain R1808)).